A 379-amino-acid chain; its full sequence is Chaperone protein DnaJ (379 aa).

The J domain occupies 5–70 (DYYEILGVSK…QKRAAYDQYG (66 aa)). The segment at 134-212 (GVTKEIRIPT…CHGHGRVEKS (79 aa)) adopts a CR-type zinc-finger fold. Residues Cys147, Cys150, Cys164, Cys167, Cys186, Cys189, Cys200, and Cys203 each coordinate Zn(2+). CXXCXGXG motif repeat units follow at residues 147–154 (CDVCHGSG), 164–171 (CPTCHGSG), 186–193 (CPHCQGRG), and 200–207 (CHKCHGHG).

The protein belongs to the DnaJ family. Homodimer. Zn(2+) serves as cofactor.

The protein localises to the cytoplasm. Its function is as follows. Participates actively in the response to hyperosmotic and heat shock by preventing the aggregation of stress-denatured proteins and by disaggregating proteins, also in an autonomous, DnaK-independent fashion. Unfolded proteins bind initially to DnaJ; upon interaction with the DnaJ-bound protein, DnaK hydrolyzes its bound ATP, resulting in the formation of a stable complex. GrpE releases ADP from DnaK; ATP binding to DnaK triggers the release of the substrate protein, thus completing the reaction cycle. Several rounds of ATP-dependent interactions between DnaJ, DnaK and GrpE are required for fully efficient folding. Also involved, together with DnaK and GrpE, in the DNA replication of plasmids through activation of initiation proteins. This Salmonella agona (strain SL483) protein is Chaperone protein DnaJ.